The following is a 205-amino-acid chain: GTP cyclohydrolase 1 (205 aa).

Zn(2+) is bound by residues cysteine 93, histidine 96, and cysteine 166.

This sequence belongs to the GTP cyclohydrolase I family. As to quaternary structure, homomer.

It carries out the reaction GTP + H2O = 7,8-dihydroneopterin 3'-triphosphate + formate + H(+). The protein operates within cofactor biosynthesis; 7,8-dihydroneopterin triphosphate biosynthesis; 7,8-dihydroneopterin triphosphate from GTP: step 1/1. The polypeptide is GTP cyclohydrolase 1 (Mycobacterium leprae (strain Br4923)).